The chain runs to 607 residues: Elongation factor 4 (607 aa).

The tr-type G domain occupies 11–193 (ENIRNFSIIA…KIVEVVPPPE (183 aa)). Residues 23-28 (DHGKST) and 140-143 (NKID) contribute to the GTP site.

Belongs to the TRAFAC class translation factor GTPase superfamily. Classic translation factor GTPase family. LepA subfamily.

The protein localises to the cell membrane. It carries out the reaction GTP + H2O = GDP + phosphate + H(+). Required for accurate and efficient protein synthesis under certain stress conditions. May act as a fidelity factor of the translation reaction, by catalyzing a one-codon backward translocation of tRNAs on improperly translocated ribosomes. Back-translocation proceeds from a post-translocation (POST) complex to a pre-translocation (PRE) complex, thus giving elongation factor G a second chance to translocate the tRNAs correctly. Binds to ribosomes in a GTP-dependent manner. The sequence is that of Elongation factor 4 from Staphylococcus haemolyticus (strain JCSC1435).